Here is an 888-residue protein sequence, read N- to C-terminus: Interference hedgehog (888 aa).

Positions 1 to 24 (MSLTRFSLCLLLTLLLAAIPVYLA) are cleaved as a signal peptide. At 25-688 (SPDPGVRILR…SHNETFNLNP (664 aa)) the chain is on the extracellular side. Ig-like C2-type domains lie at 28–123 (PGVR…ARLE), 134–215 (EGFK…VRLA), 234–321 (PHLL…SIQL), and 327–414 (PRIV…LQVN). 3 disulfides stabilise this stretch: C51–C106, C155–C203, and C257–C305. N80, N185, N192, N281, N336, N365, N369, and N455 each carry an N-linked (GlcNAc...) asparagine glycan. A disulfide bond links C348 and C396. Fibronectin type-III domains are found at residues 450-557 (PPSA…LQRG) and 565-660 (VPSL…TQRP). The heparin site is built by R486 and K493. N516 carries an N-linked (GlcNAc...) asparagine glycan. Residue R531 participates in heparin binding. N547 carries an N-linked (GlcNAc...) asparagine glycan. A compositionally biased stretch (polar residues) spans 655 to 667 (GRTQRPRVSTTTE). Residues 655–679 (GRTQRPRVSTTTEPAVHAMDTTTPS) are disordered. A glycan (N-linked (GlcNAc...) asparagine) is linked at N681. Residues 689–709 (LLTGTIGGGALLVLLVVSACL) traverse the membrane as a helical segment. At 710–888 (CLCRRRSSRG…SSGSLNSVGV (179 aa)) the chain is on the cytoplasmic side. Disordered regions lie at residues 759 to 789 (AQQQQQQQQQQQQQQQQQHEEKDTQDNDMSY), 812 to 864 (SSSL…PGRV), and 869 to 888 (ARLSSRSENLSSGSLNSVGV). Residues 760–775 (QQQQQQQQQQQQQQQQ) are compositionally biased toward low complexity. Residues 843 to 859 (QPTDGSTADSPRLQASN) are compositionally biased toward polar residues. The span at 872–888 (SSRSENLSSGSLNSVGV) shows a compositional bias: low complexity.

This sequence belongs to the immunoglobulin superfamily. IHOG family. In terms of assembly, homodimer. Heterotetramer; 2 iHog chains bind 2 hh chains when facilitated by heparin, heparin is required to promote high-affinity interactions between hh and iHog.

Its subcellular location is the membrane. Its function is as follows. Mediates response to the active Hedgehog (Hh) protein signal in embryos, functioning upstream or at the level of patched (ptc). In Drosophila grimshawi (Hawaiian fruit fly), this protein is Interference hedgehog.